Consider the following 372-residue polypeptide: GDSL esterase/lipase At5g45910 (372 aa).

An N-terminal signal peptide occupies residues 1–19 (MRINMLFIVAFSFLVSVRS). The active-site Nucleophile is Ser-37. Asn-66, Asn-101, and Asn-137 each carry an N-linked (GlcNAc...) asparagine glycan. Active-site residues include Asp-345 and His-348.

The protein belongs to the 'GDSL' lipolytic enzyme family.

The protein resides in the secreted. This Arabidopsis thaliana (Mouse-ear cress) protein is GDSL esterase/lipase At5g45910.